We begin with the raw amino-acid sequence, 66 residues long: Pteroicidin-alpha (66 aa).

A signal peptide spans 1–22 (MKCIALFLVLSMVVLMAEPGEA). An Arginine amide; partial modification is found at R43. The propeptide occupies 44–66 (GKNRDMAEQQELERAFDRERAFA).

It belongs to the pleurocidin family. In terms of processing, this peptide exists in N-terminally amidated and non-amidated forms. The amidated form is more active and has a greater alpha-helix content than the non-amidated form. As to expression, expressed in gill, skin, intestine, spleen, anterior kidney, and blood cells.

It is found in the secreted. Functionally, the amidated peptide is bactericidal on human pathogens like S.aureus or E.coli, as well as on the fish pathogen A.salmonicida. May also be active against a variety of fungi. It can kill bacteria in less than 30 minutes (S.aureus) and 120 minutes (V.vulnificus). It induces hemolysis of erythrocytes from human and fishes (sea bass and lesser-spotted dogfish). Its function is as follows. The non-amidated peptide only inhibits growth of human pathogens like S.aureus or E.coli, and the fish pathogen A.salmonicida. Induces hemolysis of erythrocytes from human and fishes (sea bass and lesser-spotted dogfish). The protein is Pteroicidin-alpha of Pterois volitans (Red lionfish).